The chain runs to 208 residues: ATP-dependent Clp protease proteolytic subunit (208 aa).

The active-site Nucleophile is Ser-107. His-132 is an active-site residue.

This sequence belongs to the peptidase S14 family. In terms of assembly, fourteen ClpP subunits assemble into 2 heptameric rings which stack back to back to give a disk-like structure with a central cavity, resembling the structure of eukaryotic proteasomes.

Its subcellular location is the cytoplasm. The catalysed reaction is Hydrolysis of proteins to small peptides in the presence of ATP and magnesium. alpha-casein is the usual test substrate. In the absence of ATP, only oligopeptides shorter than five residues are hydrolyzed (such as succinyl-Leu-Tyr-|-NHMec, and Leu-Tyr-Leu-|-Tyr-Trp, in which cleavage of the -Tyr-|-Leu- and -Tyr-|-Trp bonds also occurs).. In terms of biological role, cleaves peptides in various proteins in a process that requires ATP hydrolysis. Has a chymotrypsin-like activity. Plays a major role in the degradation of misfolded proteins. The sequence is that of ATP-dependent Clp protease proteolytic subunit from Methylorubrum populi (strain ATCC BAA-705 / NCIMB 13946 / BJ001) (Methylobacterium populi).